The following is a 152-amino-acid chain: Transcriptional regulator MraZ (152 aa).

SpoVT-AbrB domains are found at residues 5-52 (ASAI…PIHE) and 81-124 (AHEV…DEQA).

The protein belongs to the MraZ family. As to quaternary structure, forms oligomers.

It is found in the cytoplasm. The protein resides in the nucleoid. The chain is Transcriptional regulator MraZ from Shewanella sp. (strain ANA-3).